Reading from the N-terminus, the 443-residue chain is Probable lipase C16A3.12c (443 aa).

Over 1–16 the chain is Cytoplasmic; the sequence is MSGFNKNQIYWGDYVG. A helical; Signal-anchor for type II membrane protein membrane pass occupies residues 17-37; the sequence is VIAAFVGVYTELVARIFIYMI. At 38-443 the chain is on the lumenal side; the sequence is PERVREWFRV…KHFVKQNGFH (406 aa). An AB hydrolase-1 domain is found at 116–410; sequence VVYCHHGLMT…HYEHLDFLWG (295 aa). 2 N-linked (GlcNAc...) asparagine glycosylation sites follow: Asn-134 and Asn-177. Ser-210 acts as the Nucleophile in catalysis. Asn-304 and Asn-335 each carry an N-linked (GlcNAc...) asparagine glycan. Residues Asp-378 and His-404 each act as charge relay system in the active site.

This sequence belongs to the AB hydrolase superfamily. Lipase family.

The protein resides in the cytoplasm. It is found in the vacuole. It localises to the membrane. Functionally, probable lipase. In Schizosaccharomyces pombe (strain 972 / ATCC 24843) (Fission yeast), this protein is Probable lipase C16A3.12c.